We begin with the raw amino-acid sequence, 191 residues long: Cytochrome b-245 light chain (191 aa).

At 2 to 7 the chain is on the cytoplasmic side; it reads GQIEWA. A helical transmembrane segment spans residues 8–30; the sequence is MWANEQALASGLILITGGIVATA. Over 31-35 the chain is Extracellular; the sequence is GQFTQ. A helical transmembrane segment spans residues 36–53; it reads WYLGAYSIAAGVLVCLLE. At 54 to 69 the chain is on the cytoplasmic side; it reads YPRGKRSKGSTMERCG. Residues 70 to 80 lie within the membrane without spanning it; the sequence is QKYLTRVVKLF. The Cytoplasmic segment spans residues 81–86; the sequence is GPLTRN. The helical transmembrane segment at 87–104 threads the bilayer; that stretch reads YYIRAFLHLGLAVPAGFL. L105 is a topological domain (extracellular). The chain crosses the membrane as a helical span at residues 106-126; sequence ATILGTACLAIASGIYLLAAI. At 127-191 the chain is on the cytoplasmic side; sequence RGEQWSPIEP…NPMPVNDEVV (65 aa). The tract at residues 134 to 191 is disordered; sequence IEPKPKERPQIGGTIKQPPSNPPPRPPAEARKKPSEEAAGVPTGGPQENPMPVNDEVV. T147 is modified (phosphothreonine). Residue K149 forms a Glycyl lysine isopeptide (Lys-Gly) (interchain with G-Cter in ubiquitin) linkage. The residue at position 168 (S168) is a Phosphoserine.

Belongs to the p22phox family. In terms of assembly, component of the phagocyte NADPH oxidase core complex/cytochrome b558 complex, composed of CYBB (heavy chain (beta)) and CYBA (light chain (alpha)). Component of the phagocyte NADPH oxidase complex composed of an obligatory core heterodimer formed by the membrane proteins CYBA and CYBB and the cytosolic regulatory subunits NCF1/p47-phox, NCF2/p67-phox, NCF4/p40-phox and the small GTPase RAC1 or RAC2. Interacts with NCF1 (via SH3 domain). Interacts with SH3PXD2A. Interacts with DUOX1, DUOX2 and TPO. Interacts with NOX4; this interaction mediates superoxide generation. Interacts with calprotectin (S100A8/9). Interacts with GBP7. Interacts with NOXO1. Forms a heterodimer with NOX3 and is essential for activity and cell membrane localization of NOX3. Interacts with NOX1. In terms of processing, phosphorylation at Thr-147 enhances NADPH oxidase activity by promoting NCF1/p47-phox binding. Post-translationally, ubiquitinated at Lys-149 likely by RNF145.

It is found in the cell membrane. Subunit of NADPH oxidase complexes that is required for the NADPH oxidase activity that generates, in various cell types, superoxide from molecular oxygen utilizing NADPH as an electron donor. Subunit of the phagocyte NADPH oxidase complex that mediates the transfer of electrons from cytosolic NADPH to O2 to produce the superoxide anion (O2(-)). In the activated complex, electrons are first transferred from NADPH to flavin adenine dinucleotide (FAD) and subsequently transferred via two heme molecules to molecular oxygen, producing superoxide through an outer-sphere reaction. Activation of the NADPH oxidase complex is initiated by the assembly of cytosolic subunits of the NADPH oxidase complex with the core NADPH oxidase complex to form a complex at the plasma membrane or phagosomal membrane. This activation process is initiated by phosphorylation dependent binding of the cytosolic NCF1/p47-phox subunit to the C-terminus of CYBA/p22-phox. Aassociates with NOX3 to form a functional NADPH oxidase constitutively generating superoxide. This Bos taurus (Bovine) protein is Cytochrome b-245 light chain.